Consider the following 117-residue polypeptide: G antigen 12B/C/D/E (117 aa).

The interval Met1 to Cys117 is disordered. Acidic residues-rich tracts occupy residues Phe32–Glu45 and Glu87–Glu96. A compositionally biased stretch (basic and acidic residues) spans Glu103–Cys117.

It belongs to the GAGE family.

This chain is G antigen 12B/C/D/E (GAGE12B), found in Homo sapiens (Human).